The chain runs to 268 residues: Oxygen-evolving enhancer protein 2-1, chloroplastic (268 aa).

The transit peptide at 1 to 82 (MASTQCFLHQ…IGSKVSPADA (82 aa)) directs the protein to the chloroplast.

The protein belongs to the PsbP family.

Its subcellular location is the plastid. It is found in the chloroplast thylakoid membrane. May be involved in the regulation of photosystem II. In Nicotiana tabacum (Common tobacco), this protein is Oxygen-evolving enhancer protein 2-1, chloroplastic (PSBP1).